Consider the following 214-residue polypeptide: MRVKHKPWAKDRLEEFPAIYIKNPEDFKGQWHEVFGNDNPIHIEIGSGKGQFISGMAKANPEINYIGIEMIESVLVSALDKAIEVDVPNLRLVARDAKLLEDCFEKGEIAQIYLNFSDPWPKKRHTKRRLTNPTFLTIYERLLPKAGEIHFKTDNRSLFEYSLVAFSEYNMLLTFVSLDLHNSDYEGNIKTEYEEKFSAKGFPIYRLEAKFDRN.

The S-adenosyl-L-methionine site is built by Glu-44, Glu-69, Asp-96, and Asp-118. Asp-118 is an active-site residue. Residues Lys-122, Asp-154, and 191 to 194 contribute to the substrate site; that span reads TEYE.

Belongs to the class I-like SAM-binding methyltransferase superfamily. TrmB family.

The catalysed reaction is guanosine(46) in tRNA + S-adenosyl-L-methionine = N(7)-methylguanosine(46) in tRNA + S-adenosyl-L-homocysteine. It functions in the pathway tRNA modification; N(7)-methylguanine-tRNA biosynthesis. In terms of biological role, catalyzes the formation of N(7)-methylguanine at position 46 (m7G46) in tRNA. This is tRNA (guanine-N(7)-)-methyltransferase from Listeria monocytogenes serovar 1/2a (strain ATCC BAA-679 / EGD-e).